Consider the following 106-residue polypeptide: Antitoxin MazE3 (106 aa).

As to quaternary structure, forms a complex with cognate toxin MazF3, possibly with 1:1 stoichiometry.

Functionally, antitoxin component of a type II toxin-antitoxin (TA) system. Upon expression in E.coli and M.smegmatis neutralizes the effect of cognate toxin MazF3. Overexpression of MazE3 alone decreased persister cells formation in M.smegmatis upon challenge with gentamicin or kanamycin. The polypeptide is Antitoxin MazE3 (mazE3) (Mycobacterium tuberculosis (strain ATCC 25618 / H37Rv)).